The chain runs to 370 residues: Proline-rich protein 5-like (370 aa).

The residue at position 28 (serine 28) is a Phosphoserine. Disordered stretches follow at residues 312-346 (LGEE…LDSP) and 351-370 (LEDV…ASLS).

Belongs to the PROTOR family. As to quaternary structure, interacts with the mammalian target of rapamycin complex 2 (mTORC2) which contains MTOR, MLST8, PRR5, RICTOR, MAPKAP1 and DEPTOR. Interacts with RFFL. Interacts (via C-terminus) with ZFP36 (via C-terminus); this interaction may accelerate ZFP36-mediated mRNA decay during stress. Interacts with RICTOR. In terms of processing, ubiquitinated. Ubiquitination by RFFL promotes proteasomal degradation of PRR5L thereby modifying the substrate-specific activity of the mTORC2 complex. Ubiquitination by RFFL is stimulated by LPA/lysophosphatidic acid.

In terms of biological role, associates with the mTORC2 complex that regulates cellular processes including survival and organization of the cytoskeleton. Regulates the activity of the mTORC2 complex in a substrate-specific manner preventing for instance the specific phosphorylation of PKCs and thereby controlling cell migration. Plays a role in the stimulation of ZFP36-mediated mRNA decay of several ZFP36-associated mRNAs, such as TNF-alpha and GM-CSF, in response to stress. Required for ZFP36 localization to cytoplasmic stress granule (SG) and P-body (PB) in response to stress. The protein is Proline-rich protein 5-like (Prr5l) of Mus musculus (Mouse).